Consider the following 595-residue polypeptide: APOBEC1 complementation factor (595 aa).

3 consecutive RRM domains span residues 56–134 (CEIF…ASVD), 136–218 (CRLF…WAEP), and 231–303 (KILY…LAKP). The interval 360–409 (HFPATKGHLSNRALIRTPSVREIYMNVPVGAAGVRGLGGRGYLAYTGLGR) is required for nuclear localization.

As to quaternary structure, part of the apolipoprotein B mRNA editing complex with APOBEC1. Interacts with TNPO2; TNPO2 may be responsible for transport of A1CF into the nucleus. Interacts with SYNCRIP. Interacts with CELF2/CUGBP2. Interacts with RBM47. As to expression, expressed primarily in liver, small intestine and kidney.

The protein resides in the nucleus. It localises to the endoplasmic reticulum. The protein localises to the cytoplasm. Its function is as follows. Essential component of the apolipoprotein B mRNA editing enzyme complex which is responsible for the postranscriptional editing of a CAA codon for Gln to a UAA codon for stop in APOB mRNA. Binds to APOB mRNA and is probably responsible for docking the catalytic subunit, APOBEC1, to the mRNA to allow it to deaminate its target cytosine. The complex also seems to protect the edited APOB mRNA from nonsense-mediated decay. This is APOBEC1 complementation factor (A1cf) from Mus musculus (Mouse).